The chain runs to 84 residues: Acetylcholine receptor subunit alpha (84 aa).

A disulfide bond links Cys-7 and Cys-21. Asn-20 and Asn-66 each carry an N-linked (GlcNAc...) asparagine glycan. Cys-71 and Cys-72 are joined by a disulfide.

This sequence belongs to the ligand-gated ion channel (TC 1.A.9) family. Acetylcholine receptor (TC 1.A.9.1) subfamily. Alpha-1/CHRNA1 sub-subfamily. As to quaternary structure, one of the alpha chains that assemble within the acetylcholine receptor, a pentamer of two alpha chains, a beta, a delta, and a gamma (in immature muscle) or epsilon (in mature muscle) chains. The muscle heteropentamer composed of alpha-1, beta-1, delta, epsilon subunits interacts with the alpha-conotoxin ImII.

The protein resides in the postsynaptic cell membrane. It is found in the cell membrane. The catalysed reaction is K(+)(in) = K(+)(out). It catalyses the reaction Na(+)(in) = Na(+)(out). In terms of biological role, upon acetylcholine binding, the AChR responds by an extensive change in conformation that affects all subunits and leads to opening of an ion-conducting channel across the plasma membrane. This Herpestes ichneumon (Egyptian mongoose) protein is Acetylcholine receptor subunit alpha (CHRNA1).